The sequence spans 278 residues: HTH-type transcriptional activator RhaS (278 aa).

The HTH araC/xylS-type domain occupies 174–272; it reads NHLIAWLEDH…GWSPREIRQG (99 aa). DNA-binding regions (H-T-H motif) lie at residues 191 to 212 and 239 to 262; these read EAIA…KQHT and VTHI…RREF.

Binds DNA as a dimer.

It is found in the cytoplasm. In terms of biological role, activates expression of the rhaBAD and rhaT operons. In Escherichia fergusonii (strain ATCC 35469 / DSM 13698 / CCUG 18766 / IAM 14443 / JCM 21226 / LMG 7866 / NBRC 102419 / NCTC 12128 / CDC 0568-73), this protein is HTH-type transcriptional activator RhaS.